Consider the following 500-residue polypeptide: Inner membrane transporter YjeM (500 aa).

Residues 1–7 (MPHTIKK) lie on the Cytoplasmic side of the membrane. The helical transmembrane segment at 8–28 (MSLIGLILMIFTSVFGFANSP) threads the bilayer. The Periplasmic portion of the chain corresponds to 29–37 (SAYYLMGYS). The helical transmembrane segment at 38 to 58 (AIPFYIFSALLFFIPFALMMA) threads the bilayer. The Cytoplasmic portion of the chain corresponds to 59-82 (EMGAAYRKEEGGIYSWMNNSVGPR). The chain crosses the membrane as a helical span at residues 83-103 (FAFIGTFMWFSSYIIWMVSTS). Residues 104 to 132 (AKVWVPFSTFLYGSDMTQHWRIAGLEPTQ) are Periplasmic-facing. Residues 133 to 153 (VVGLLAVAWMILVTVVASKGI) traverse the membrane as a helical segment. Over 154–163 (NKIARITAVG) the chain is Cytoplasmic. Residues 164–184 (GIAVMCLNLVLLLVSITILLL) traverse the membrane as a helical segment. The Periplasmic segment spans residues 185–209 (NGGHFAQDINFLASPNPGYQSGLAM). A helical transmembrane segment spans residues 210-230 (LSFVVFAIFAYGGIEAVGGLV). Residues 231–243 (DKTENPEKNFAKG) are Cytoplasmic-facing. A helical transmembrane segment spans residues 244-264 (IVFAAIVISIGYSLAIFLWGV). Residues 265–319 (STNWQQVLSNGSVNLGNITYVLMKSLGMTLGNALHLSPEASLSLGVWFARITGLS) are Periplasmic-facing. The chain crosses the membrane as a helical span at residues 320–340 (MFLAYTGAFFTLCYSPLKAII). Topologically, residues 341–369 (QGTPKALWPEPMTRLNAMGMPSIAMWMQC) are cytoplasmic. A helical transmembrane segment spans residues 370–390 (GLVTVFILLVSFGGGTASAFF). Residues 391–394 (NKLT) lie on the Periplasmic side of the membrane. The helical transmembrane segment at 395–415 (LMANVSMTLPYLFLALAFPFF) threads the bilayer. Residues 416–433 (KARQDLDRPFVIFKTHLS) are Cytoplasmic-facing. Residues 434–454 (AMIATVVVVLVVTFANVFTII) form a helical membrane-spanning segment. At 455–462 (QPVVEAGD) the chain is on the periplasmic side. The chain crosses the membrane as a helical span at residues 463 to 483 (WDSTLWMIGGPVFFSLLAMAI). Topologically, residues 484–500 (YQNYCSRVAKNPQWAVE) are cytoplasmic.

The protein belongs to the amino acid-polyamine-organocation (APC) superfamily.

It localises to the cell inner membrane. In Escherichia coli (strain K12), this protein is Inner membrane transporter YjeM (yjeM).